The following is a 79-amino-acid chain: Dolichyl-diphosphooligosaccharide--protein glycosyltransferase subunit TMEM258 (79 aa).

Met-1 is subject to N-acetylmethionine. Topologically, residues 1–16 are lumenal; sequence MELEAMSRYTSPVNPA. The helical transmembrane segment at 17 to 37 threads the bilayer; the sequence is VFPHLTVVLLAIGMFFTAWFF. Residues 38 to 54 lie on the Cytoplasmic side of the membrane; that stretch reads VYEVTSTKYTRDICKEL. The helical transmembrane segment at 55–75 threads the bilayer; sequence LISLVASLFMGFGVLFLLLWV. Topologically, residues 76–79 are lumenal; sequence GIYV.

It belongs to the OST5 family. As to quaternary structure, component of the oligosaccharyltransferase (OST) complex. OST exists in two different complex forms which contain common core subunits RPN1, RPN2, OST48, OST4, DAD1 and TMEM258, either STT3A or STT3B as catalytic subunits, and form-specific accessory subunits. STT3A complex assembly occurs through the formation of 3 subcomplexes. Subcomplex 1 contains RPN1 and TMEM258, subcomplex 2 contains the STT3A-specific subunits STT3A, DC2/OSTC, and KCP2 as well as the core subunit OST4, and subcomplex 3 contains RPN2, DAD1, and OST48. The STT3A complex can form stable complexes with the Sec61 complex or with both the Sec61 and TRAP complexes.

It localises to the membrane. Its subcellular location is the endoplasmic reticulum. It is found in the cytoplasm. It functions in the pathway protein modification; protein glycosylation. Functionally, subunit of the oligosaccharyl transferase (OST) complex that catalyzes the initial transfer of a defined glycan (Glc(3)Man(9)GlcNAc(2) in eukaryotes) from the lipid carrier dolichol-pyrophosphate to an asparagine residue within an Asn-X-Ser/Thr consensus motif in nascent polypeptide chains, the first step in protein N-glycosylation. N-glycosylation occurs cotranslationally and the complex associates with the Sec61 complex at the channel-forming translocon complex that mediates protein translocation across the endoplasmic reticulum (ER). All subunits are required for a maximal enzyme activity. The protein is Dolichyl-diphosphooligosaccharide--protein glycosyltransferase subunit TMEM258 of Canis lupus familiaris (Dog).